We begin with the raw amino-acid sequence, 288 residues long: 5,10-methylenetetrahydrofolate reductase (288 aa).

FAD-binding residues include alanine 51, histidine 73, glycine 106, aspartate 107, alanine 118, tyrosine 140, histidine 144, and lysine 159. (6S)-5-methyl-5,6,7,8-tetrahydrofolate is bound at residue aspartate 107. (6S)-5-methyl-5,6,7,8-tetrahydrofolate is bound at residue glutamine 175. Glutamine 175 is a binding site for NADH.

It belongs to the methylenetetrahydrofolate reductase family. It depends on FAD as a cofactor.

It carries out the reaction (6S)-5-methyl-5,6,7,8-tetrahydrofolate + NAD(+) = (6R)-5,10-methylene-5,6,7,8-tetrahydrofolate + NADH + H(+). It functions in the pathway one-carbon metabolism; tetrahydrofolate interconversion. It participates in amino-acid biosynthesis; L-methionine biosynthesis via de novo pathway. Functionally, catalyzes the NADH-dependent reduction of 5,10-methylenetetrahydrofolate to 5-methyltetrahydrofolate. Is required to provide the methyl group necessary for methionine synthetase to convert homocysteine to methionine; the methyl group is given by 5-methyltetrahydrofolate. Is required for Sphingobium SYK-6 to grow on vanillate or syringate as the sole source of carbon. The polypeptide is 5,10-methylenetetrahydrofolate reductase (Sphingobium sp. (strain NBRC 103272 / SYK-6)).